Here is a 162-residue protein sequence, read N- to C-terminus: G/U mismatch-specific DNA glycosylase (162 aa).

This sequence belongs to the uracil-DNA glycosylase (UDG) superfamily. TDG/mug family. Binds DNA as a monomer.

Its subcellular location is the cytoplasm. The catalysed reaction is Specifically hydrolyzes mismatched double-stranded DNA and polynucleotides, releasing free uracil.. Excises ethenocytosine and uracil, which can arise by alkylation or deamination of cytosine, respectively, from the corresponding mispairs with guanine in ds-DNA. It is capable of hydrolyzing the carbon-nitrogen bond between the sugar-phosphate backbone of the DNA and the mispaired base. The complementary strand guanine functions in substrate recognition. Required for DNA damage lesion repair in stationary-phase cells. The sequence is that of G/U mismatch-specific DNA glycosylase from Serratia marcescens.